A 363-amino-acid chain; its full sequence is Photosystem II protein D1 1 (363 aa).

The next 3 helical transmembrane spans lie at 32-49 (YVGWFGLLMIPSLFVSAI), 121-136 (HFLIAIWTYLGRQWEL), and 145-159 (WIAMAFSAPVAAATA). Position 121 (His121) interacts with chlorophyll a. Tyr129 is a binding site for pheophytin a. Residues Glu173 and Glu192 each contribute to the [CaMn4O5] cluster site. Residues 200–221 (FHMLGVVGVFGGAFLSAMHGSL) form a helical membrane-spanning segment. Position 201 (His201) interacts with chlorophyll a. Residues His218 and 268-269 (AF) each bind a quinone. His218 contacts Fe cation. His276 contributes to the Fe cation binding site. The helical transmembrane segment at 278-292 (LLAVLPTIGIWFAAL) threads the bilayer. His336 and Ala348 together coordinate [CaMn4O5] cluster. Residues 349 to 363 (STESKEIPTIPIMTS) constitute a propeptide that is removed on maturation.

This sequence belongs to the reaction center PufL/M/PsbA/D family. In terms of assembly, PSII is composed of 1 copy each of membrane proteins PsbA, PsbB, PsbC, PsbD, PsbE, PsbF, PsbH, PsbI, PsbJ, PsbK, PsbL, PsbM, PsbT, PsbX, PsbY, PsbZ, Psb30/Ycf12, peripheral proteins PsbO, CyanoQ (PsbQ), PsbU, PsbV and a large number of cofactors. It forms dimeric complexes. The D1/D2 heterodimer binds P680, chlorophylls that are the primary electron donor of PSII, and subsequent electron acceptors. It shares a non-heme iron and each subunit binds pheophytin, quinone, additional chlorophylls, carotenoids and lipids. D1 provides most of the ligands for the Mn4-Ca-O5 cluster of the oxygen-evolving complex (OEC). There is also a Cl(-1) ion associated with D1 and D2, which is required for oxygen evolution. The PSII complex binds additional chlorophylls, carotenoids and specific lipids. serves as cofactor. Post-translationally, tyr-164 forms a radical intermediate that is referred to as redox-active TyrZ, YZ or Y-Z. C-terminally processed by CtpA; processing is essential to allow assembly of the oxygen-evolving complex and thus photosynthetic growth.

It is found in the cellular thylakoid membrane. The catalysed reaction is 2 a plastoquinone + 4 hnu + 2 H2O = 2 a plastoquinol + O2. Functionally, photosystem II (PSII) is a light-driven water:plastoquinone oxidoreductase that uses light energy to abstract electrons from H(2)O, generating O(2) and a proton gradient subsequently used for ATP formation. It consists of a core antenna complex that captures photons, and an electron transfer chain that converts photonic excitation into a charge separation. The D1/D2 (PsbA/PsbD) reaction center heterodimer binds P680, the primary electron donor of PSII as well as several subsequent electron acceptors. This Acaryochloris marina (strain MBIC 11017) protein is Photosystem II protein D1 1.